The following is a 362-amino-acid chain: Peptide chain release factor 1 (362 aa).

Gln235 is modified (N5-methylglutamine).

It belongs to the prokaryotic/mitochondrial release factor family. In terms of processing, methylated by PrmC. Methylation increases the termination efficiency of RF1.

Its subcellular location is the cytoplasm. In terms of biological role, peptide chain release factor 1 directs the termination of translation in response to the peptide chain termination codons UAG and UAA. This Acinetobacter baumannii (strain AYE) protein is Peptide chain release factor 1.